The chain runs to 650 residues: p-hydroxybenzoic acid efflux pump subunit AaeB (650 aa).

The next 11 helical transmembrane spans lie at 7-27 (FPIKLTFALVAALMIGFHLNL), 32-52 (WAVMTAGIVAGGTAFAAGGDP), 61-81 (GILRIIGTFIGCVAALVIMIA), 87-107 (VVMLLLCCIWAGFCVWLSSLI), 115-135 (LGLAGYTALIIVVTANASGGL), 148-168 (EIILGILCAILADMIFSPRSI), 365-385 (LFWLYTGWTSGSGCMVMLGVI), 402-422 (FVYGMTVAVPLGALYFMYILP), 426-446 (QSAVLLCIAIGLLGFISGILI), 450-470 (QIGTLGAMVGTINVLVLDNPM), and 478-498 (IDNALGQWIGSFVALMVILLI).

The protein belongs to the aromatic acid exporter ArAE (TC 2.A.85) family.

The protein resides in the cell inner membrane. Its function is as follows. Forms an efflux pump with AaeA. Could function as a metabolic relief valve, allowing to eliminate certain compounds when they accumulate to high levels in the cell. This is p-hydroxybenzoic acid efflux pump subunit AaeB from Pantoea ananatis (strain LMG 20103).